The sequence spans 103 residues: Phosphoribosyl-ATP pyrophosphatase (103 aa).

The tract at residues 84-103 is disordered; the sequence is LQSREGKLSKTSDRKEINDL.

This sequence belongs to the PRA-PH family.

Its subcellular location is the cytoplasm. The catalysed reaction is 1-(5-phospho-beta-D-ribosyl)-ATP + H2O = 1-(5-phospho-beta-D-ribosyl)-5'-AMP + diphosphate + H(+). It participates in amino-acid biosynthesis; L-histidine biosynthesis; L-histidine from 5-phospho-alpha-D-ribose 1-diphosphate: step 2/9. This Listeria innocua serovar 6a (strain ATCC BAA-680 / CLIP 11262) protein is Phosphoribosyl-ATP pyrophosphatase (hisE).